A 692-amino-acid chain; its full sequence is Chaperone protein dnaK1 (692 aa).

Threonine 197 carries the post-translational modification Phosphothreonine; by autocatalysis.

This sequence belongs to the heat shock protein 70 family.

Acts as a chaperone. The protein is Chaperone protein dnaK1 (dnaK1) of Synechocystis sp. (strain ATCC 27184 / PCC 6803 / Kazusa).